A 401-amino-acid polypeptide reads, in one-letter code: Tryptophan synthase beta chain (401 aa).

Lys91 is subject to N6-(pyridoxal phosphate)lysine.

Belongs to the TrpB family. As to quaternary structure, tetramer of two alpha and two beta chains. The cofactor is pyridoxal 5'-phosphate.

It carries out the reaction (1S,2R)-1-C-(indol-3-yl)glycerol 3-phosphate + L-serine = D-glyceraldehyde 3-phosphate + L-tryptophan + H2O. It functions in the pathway amino-acid biosynthesis; L-tryptophan biosynthesis; L-tryptophan from chorismate: step 5/5. Functionally, the beta subunit is responsible for the synthesis of L-tryptophan from indole and L-serine. This Lactococcus lactis subsp. cremoris (strain MG1363) protein is Tryptophan synthase beta chain.